A 399-amino-acid chain; its full sequence is Probable WRKY transcription factor 48 (399 aa).

Basic and acidic residues-rich tracts occupy residues 1–11 (MEKKKEEDHHH) and 19–38 (KEIK…EQKQ). Disordered stretches follow at residues 1–57 (MEKK…TSSD) and 138–202 (AESS…KNQK). Over residues 143–161 (VVNTTPTSPNSTSVSSSSN) the composition is skewed to low complexity. Positions 162–171 (EAANDNNSGK) are enriched in polar residues. Over residues 184–193 (QQEQKGTKPQ) the composition is skewed to low complexity. Residues 215 to 280 (SDIDNLDDGY…YEGQHTHPFP (66 aa)) constitute a DNA-binding region (WRKY). The segment at 361 to 399 (QASTSTSSSIRDHGLLQDILPSQIRSDTINTQTNEENKK) is disordered. The segment covering 383–399 (QIRSDTINTQTNEENKK) has biased composition (polar residues).

It localises to the nucleus. In terms of biological role, transcription factor. Interacts specifically with the W box (5'-(T)TGAC[CT]-3'), a frequently occurring elicitor-responsive cis-acting element. This Arabidopsis thaliana (Mouse-ear cress) protein is Probable WRKY transcription factor 48 (WRKY48).